The sequence spans 556 residues: MKETLQAMIRAAATAAFEKGALTASRFPDIELEAPRFRDHGDFATNLAMVSASTQKMAPRKIAEAIVAHLADSAGILLKTEIAGPGFINFFICPEAWLPVLHRIHEDQERFGACDLGGGKRVQVEFVSANPTGPLHVGHGRGAAVGDSVARILAFCGWQVHREYYVNDAGNQILTLGRSVLLRWRELSGQAVDFPEDCYQGDYIRSIARQIDAEHRQALEKMESAEAVAFCARVAADQILDGIRRDLADFSITFDQWFSEKSLVETGAVETTLARLKETGVVYESEGALWFATSRFGDEKDRVVVRNNGEATYFASDIAYHKNKFDRGFNRVIDVWGADHHGYIPRVKAAIGAVGRSQDDLDVILVQLVALLREGQPVSMSTRSGEFVTLKEVTNEVGADAARFIFLSRHYDSPLDFDLELAKKKSNDNPVYYVQYVHARIASMLKKAAEEKGIGRVTAVDDKTLRRLAEPEEIDLVKLLARYPEAVSHAARFLEPHRITFYLLDLAAGFHGYYSRHKVLTEDDGLTMARLYLVCAVKQVIKNGLALLGVSAPESM.

The short motif at 129–139 (ANPTGPLHVGH) is the 'HIGH' region element.

The protein belongs to the class-I aminoacyl-tRNA synthetase family. Monomer.

The protein resides in the cytoplasm. The catalysed reaction is tRNA(Arg) + L-arginine + ATP = L-arginyl-tRNA(Arg) + AMP + diphosphate. This is Arginine--tRNA ligase from Desulfosudis oleivorans (strain DSM 6200 / JCM 39069 / Hxd3) (Desulfococcus oleovorans).